A 562-amino-acid chain; its full sequence is Protein wntless (562 aa).

Residues 1–13 (MSGTILENLSGRK) are Cytoplasmic-facing. The helical transmembrane segment at 14–34 (LSILVTTLLLCQVLCFLLGGL) threads the bilayer. The Lumenal portion of the chain corresponds to 35 to 239 (YAPLPAGHVT…AIHQNGGFTQ (205 aa)). Asparagine 58 is a glycosylation site (N-linked (GlcNAc...) asparagine). A helical transmembrane segment spans residues 240 to 260 (IWLLLKTVLFPFVVGIMIWFW). Residues 261–270 (RRVHLLQRSP) are Cytoplasmic-facing. A helical transmembrane segment spans residues 271 to 291 (ALLEYMLIYLGAALTFLNLPL). Over 292-311 (EYLSLVFEMPYMLLLSDIRQ) the chain is Lumenal. A helical membrane pass occupies residues 312–332 (GIFYAMLLTFWLVFAGEHMLI). Residues 333 to 344 (QDAPNKSTIRSR) lie on the Cytoplasmic side of the membrane. Residues 345 to 365 (YWKHLSAVVVGCISLFVFDIC) form a helical membrane-spanning segment. The Lumenal portion of the chain corresponds to 366–390 (ERGVQLRNPFYSIWAMPLAAKMAMT). A helical transmembrane segment spans residues 391–411 (FIVLAGVSAAIYFLFLCYMIW). Residues 412-441 (KVFRNIGDKRTSLPSMSQARRLHYESLIYR) are Cytoplasmic-facing. The helical transmembrane segment at 442 to 462 (FKFLMLATIVCAALTVTGFIM) threads the bilayer. Over 463-482 (GQRAEGQWDWNDNVAIQPTS) the chain is Lumenal. Residues 483 to 503 (AFLTGVYGMWNIYIFALLILY) traverse the membrane as a helical segment. The Cytoplasmic portion of the chain corresponds to 504 to 562 (APSHKQWPTMHHSDETTQSNENIVASAASEEIEFSHLPSDSNPSEISSLTSFTRKVAFD). Residues 539-562 (HLPSDSNPSEISSLTSFTRKVAFD) form a disordered region. Positions 541 to 556 (PSDSNPSEISSLTSFT) are enriched in polar residues.

This sequence belongs to the wntless family. Interacts with wg; in the Golgi. Interacts with Vps35, a component of the retromer complex; wls stability is regulated by Vps35.

The protein localises to the presynaptic cell membrane. Its subcellular location is the postsynaptic cell membrane. The protein resides in the cell membrane. It localises to the endoplasmic reticulum membrane. It is found in the endosome membrane. The protein localises to the golgi apparatus membrane. Functionally, a segment polarity gene required for wingless (wg)-dependent patterning processes, acting in both wg-sending cells and wg-target cells. In non-neuronal cells wls directs wg secretion. The wls traffic loop encompasses the Golgi, the cell surface, an endocytic compartment and a retrograde route leading back to the Golgi, and involves clathrin-mediated endocytosis and the retromer complex (a conserved protein complex consisting of Vps35 and Vps26). In neuronal cells (the larval motorneuron NMJ), the wg signal moves across the synapse via the release of wls-containing exosome-like vesicles. Postsynaptic wls is required for the trafficking of fz2 through the fz2-interacting protein Grip. The sequence is that of Protein wntless from Drosophila erecta (Fruit fly).